A 346-amino-acid chain; its full sequence is Biotin synthase (346 aa).

The 219-residue stretch at 38-256 (RQVQVSTLLS…IAVARIMMPT (219 aa)) folds into the Radical SAM core domain. [4Fe-4S] cluster is bound by residues Cys-53, Cys-57, and Cys-60. [2Fe-2S] cluster is bound by residues Cys-97, Cys-128, Cys-188, and Arg-260.

The protein belongs to the radical SAM superfamily. Biotin synthase family. As to quaternary structure, homodimer. It depends on [4Fe-4S] cluster as a cofactor. Requires [2Fe-2S] cluster as cofactor.

It catalyses the reaction (4R,5S)-dethiobiotin + (sulfur carrier)-SH + 2 reduced [2Fe-2S]-[ferredoxin] + 2 S-adenosyl-L-methionine = (sulfur carrier)-H + biotin + 2 5'-deoxyadenosine + 2 L-methionine + 2 oxidized [2Fe-2S]-[ferredoxin]. It participates in cofactor biosynthesis; biotin biosynthesis; biotin from 7,8-diaminononanoate: step 2/2. In terms of biological role, catalyzes the conversion of dethiobiotin (DTB) to biotin by the insertion of a sulfur atom into dethiobiotin via a radical-based mechanism. The chain is Biotin synthase from Escherichia coli O6:K15:H31 (strain 536 / UPEC).